Consider the following 70-residue polypeptide: Kappa-scoloptoxin(07)-Ssm2b (70 aa).

The signal sequence occupies residues 1-19 (MLVFYALLFVSVFSSTVMG). The propeptide occupies 20–39 (ATIDKPILREAIEEIDVNKR).

This sequence belongs to the scoloptoxin-07 family. Contains 3 disulfide bonds. As to expression, expressed by the venom gland.

The protein localises to the secreted. Functionally, inhibits voltage-gated potassium channels. The protein is Kappa-scoloptoxin(07)-Ssm2b of Scolopendra mutilans (Chinese red-headed centipede).